The primary structure comprises 182 residues: Adenine phosphoribosyltransferase (182 aa).

The protein belongs to the purine/pyrimidine phosphoribosyltransferase family. Homodimer.

The protein resides in the cytoplasm. The enzyme catalyses AMP + diphosphate = 5-phospho-alpha-D-ribose 1-diphosphate + adenine. The protein operates within purine metabolism; AMP biosynthesis via salvage pathway; AMP from adenine: step 1/1. In terms of biological role, catalyzes a salvage reaction resulting in the formation of AMP, that is energically less costly than de novo synthesis. In Streptomyces coelicolor (strain ATCC BAA-471 / A3(2) / M145), this protein is Adenine phosphoribosyltransferase.